A 446-amino-acid polypeptide reads, in one-letter code: Probable rhamnogalacturonase A (446 aa).

Positions 1 to 18 (MPALPILALALAPLLVNG) are cleaved as a signal peptide. Cys39 and Cys65 are joined by a disulfide. N-linked (GlcNAc...) asparagine glycans are attached at residues Asn50, Asn115, and Asn124. Asp216 acts as the Proton donor in catalysis. A disulfide bridge links Cys218 with Cys235. Residues Asn236 and Asn281 are each glycosylated (N-linked (GlcNAc...) asparagine). Residue His291 is part of the active site. A glycan (N-linked (GlcNAc...) asparagine) is linked at Asn318. 2 cysteine pairs are disulfide-bonded: Cys341-Cys347 and Cys369-Cys378.

Belongs to the glycosyl hydrolase 28 family.

It is found in the secreted. The catalysed reaction is Endohydrolysis of alpha-D-GalA-(1-&gt;2)-alpha-L-Rha glycosidic bond in the rhamnogalacturonan I backbone with initial inversion of anomeric configuration releasing oligosaccharides with beta-D-GalA at the reducing end.. Pectinolytic enzymes consist of four classes of enzymes: pectine lyase, polygalacturonase, pectin methylesterase and rhamnogalacturonase. Hydrolyzes alpha-D-galacturonopyranosyl-(1,2)-alpha-L-rhamnopyranosyl linkages in the backbone of the hairy regions of pectins. This chain is Probable rhamnogalacturonase A (rhgA), found in Aspergillus niger (strain ATCC MYA-4892 / CBS 513.88 / FGSC A1513).